The primary structure comprises 464 residues: Integrator complex subunit 12 (464 aa).

A disordered region spans residues 42–98; sequence GNDSVYRPQPKEVEQPKAMLSKVKPETKASSSTPSSSILSKPLASEKVKKEAEKRTA. Low complexity predominate over residues 69 to 84; that stretch reads KASSSTPSSSILSKPL. A compositionally biased stretch (basic and acidic residues) spans 85–98; sequence ASEKVKKEAEKRTA. The segment at 156 to 212 adopts a PHD-type zinc-finger fold; it reads GLACVVCRQMTVFSGNQLVECQECHNLYHQDCHRPQVTDKDVNDPRLVWYCARCTRQ. 2 disordered regions span residues 216–252 and 312–445; these read MAQKNQKPSQKPAPSAVSAVTPVAKDPSVNKPELKSK and TNSQ…SQLN. Residues 227–239 are compositionally biased toward low complexity; it reads PAPSAVSAVTPVA. A compositionally biased stretch (polar residues) spans 312-329; the sequence is TNSQATSGKPPSLSSVQK. A compositionally biased stretch (low complexity) spans 339-371; the sequence is SKAGSVSKSGSGGSSSTIPLKPLPPLILGKTGL. Positions 372 to 382 are enriched in polar residues; it reads SRSMSSDNVSK. The span at 384 to 421 shows a compositional bias: low complexity; it reads GLPSPNPSSSGSVSSLSSQLGSNNGSSNTAGSNVNSSN. A compositionally biased stretch (polar residues) spans 428–445; it reads SMQQSGAKGPTSQESQLN.

It belongs to the Integrator subunit 12 family. Component of the Integrator complex, composed of core subunits INTS1, INTS2, INTS3, INTS4, INTS5, INTS6, INTS7, INTS8, INTS9/RC74, INTS10, INTS11/CPSF3L, INTS12, INTS13, INTS14 and INTS15. The core complex associates with protein phosphatase 2A subunits PPP2CA and PPP2R1A, to form the Integrator-PP2A (INTAC) complex.

It localises to the nucleus. Its function is as follows. Component of the integrator complex, a multiprotein complex that terminates RNA polymerase II (Pol II) transcription in the promoter-proximal region of genes. The integrator complex provides a quality checkpoint during transcription elongation by driving premature transcription termination of transcripts that are unfavorably configured for transcriptional elongation: the complex terminates transcription by (1) catalyzing dephosphorylation of the C-terminal domain (CTD) of Pol II subunit POLR2A/RPB1 and SUPT5H/SPT5, (2) degrading the exiting nascent RNA transcript via endonuclease activity and (3) promoting the release of Pol II from bound DNA. The integrator complex is also involved in terminating the synthesis of non-coding Pol II transcripts, such as enhancer RNAs (eRNAs), small nuclear RNAs (snRNAs), telomerase RNAs and long non-coding RNAs (lncRNAs). The sequence is that of Integrator complex subunit 12 (ints12) from Xenopus laevis (African clawed frog).